Reading from the N-terminus, the 525-residue chain is NAD(P)H-quinone oxidoreductase chain 4 1 (525 aa).

14 helical membrane-spanning segments follow: residues 6–26, 36–56, 91–111, 115–135, 136–156, 169–189, 212–232, 243–263, 277–297, 314–334, 335–355, 375–397, 417–437, and 464–484; these read FPWL…IPII, WYAL…FYTS, LIIL…PVTL, LFYF…AVQD, LLLF…LLAI, FILY…TMAF, LLLY…IPLH, TAPA…YALI, FAPV…LTSF, MGFV…GAVL, QMVS…ATYD, IFAM…GFVA, VIVV…LLSM, and VFVI…PKLL.

The protein belongs to the complex I subunit 4 family.

The protein localises to the cellular thylakoid membrane. It carries out the reaction a plastoquinone + NADH + (n+1) H(+)(in) = a plastoquinol + NAD(+) + n H(+)(out). It catalyses the reaction a plastoquinone + NADPH + (n+1) H(+)(in) = a plastoquinol + NADP(+) + n H(+)(out). Its function is as follows. NDH-1 shuttles electrons from NAD(P)H, via FMN and iron-sulfur (Fe-S) centers, to quinones in the respiratory chain. The immediate electron acceptor for the enzyme in this species is believed to be plastoquinone. Couples the redox reaction to proton translocation (for every two electrons transferred, four hydrogen ions are translocated across the cytoplasmic membrane), and thus conserves the redox energy in a proton gradient. This Trichormus variabilis (strain ATCC 29413 / PCC 7937) (Anabaena variabilis) protein is NAD(P)H-quinone oxidoreductase chain 4 1.